A 316-amino-acid chain; its full sequence is Transaldolase (316 aa).

Catalysis depends on lysine 127, which acts as the Schiff-base intermediate with substrate.

It belongs to the transaldolase family. Type 2 subfamily.

The protein resides in the cytoplasm. The catalysed reaction is D-sedoheptulose 7-phosphate + D-glyceraldehyde 3-phosphate = D-erythrose 4-phosphate + beta-D-fructose 6-phosphate. It participates in carbohydrate degradation; pentose phosphate pathway; D-glyceraldehyde 3-phosphate and beta-D-fructose 6-phosphate from D-ribose 5-phosphate and D-xylulose 5-phosphate (non-oxidative stage): step 2/3. Functionally, transaldolase is important for the balance of metabolites in the pentose-phosphate pathway. This Helicobacter pylori (strain Shi470) protein is Transaldolase.